The sequence spans 942 residues: Lambda-carrageenase (942 aa).

The N-terminal stretch at 1 to 25 is a signal peptide; sequence MKIKILSAMVASSLLIGCVIPTVKA.

Monomer.

It localises to the secreted. It carries out the reaction Endohydrolysis of (1-&gt;4)-beta-linkages in the backbone of lambda-carrageenan, resulting in the tetrasaccharide alpha-D-Galp2,6S2-(1-&gt;3)-beta-D-Galp2S-(1-&gt;4)-alpha-D-Galp2,6S2-(1-&gt;3)-D-Galp2S.. Hydrolyzes lambda-carrageenan with inversion of anomeric configuration. Does not hydrolyze iota- and kappa-carrageenans, agarose or porphyran. This chain is Lambda-carrageenase, found in Pseudoalteromonas carrageenovora (Alteromonas carrageenovora).